The chain runs to 156 residues: Nucleoredoxin-like protein 2 (156 aa).

The Thioredoxin domain occupies 9-147 (HLVTCKGATV…LACFQDWVEA (139 aa)).

The protein belongs to the nucleoredoxin family.

In terms of biological role, may be involved in the maintenance of both the function and the viability of sensory neurons, including photoreceptors and olfactory neurons. The polypeptide is Nucleoredoxin-like protein 2 (NXNL2) (Homo sapiens (Human)).